The following is a 708-amino-acid chain: Matrix metalloproteinase-9 (708 aa).

Residues 1 to 19 (MSPWQPLLLVLLALGYSFA) form the signal peptide. Positions 20–107 (APHQRQPTYV…PRCGVPDVGK (88 aa)) are cleaved as a propeptide — activation peptide. N39 is a glycosylation site (N-linked (GlcNAc...) asparagine). The short motif at 98 to 105 (PRCGVPDV) is the Cysteine switch element. C100 lines the Zn(2+) pocket. A glycan (N-linked (GlcNAc...) asparagine) is linked at N121. D132 and D166 together coordinate Ca(2+). Zn(2+)-binding residues include H176 and D178. Ca(2+)-binding residues include D183, G184, D186, and L188. Position 191 (H191) interacts with Zn(2+). G198, Q200, and D202 together coordinate Ca(2+). Residue H204 coordinates Zn(2+). Residues D206, D207, and E209 each contribute to the Ca(2+) site. 3 consecutive Fibronectin type-II domains span residues 226-274 (ANGA…FCPS), 284-332 (GDGK…FCPT), and 343-391 (SAGE…FCPD). Cystine bridges form between C231–C257, C245–C272, C289–C315, C303–C330, C348–C374, and C362–C389. H402 contributes to the Zn(2+) binding site. The active site involves E403. Positions 406 and 412 each coordinate Zn(2+). The disordered stretch occupies residues 441–520 (HHLYGRGSKP…SSTPDDNPCN (80 aa)). Over residues 480-490 (PTGGPTVAPTG) the composition is skewed to low complexity. Pro residues predominate over residues 491 to 502 (APSPGPTGPPTA). C519 and C707 are joined by a disulfide. Hemopexin repeat units lie at residues 521–566 (VDVF…WPAF), 567–611 (PSKL…GLGS), 613–660 (VTLV…FSGV), and 661–707 (PWNS…LLQC).

Belongs to the peptidase M10A family. As to quaternary structure, exists as monomer or homodimer; disulfide-linked. Also exists as heterodimer with LCN2. Macrophages and transformed cell lines produce only the monomeric form. Interacts with ECM1. The cofactor is Zn(2+). Requires Ca(2+) as cofactor. In terms of processing, N- and O-glycosylated.

The protein localises to the secreted. Its subcellular location is the extracellular space. The protein resides in the extracellular matrix. It catalyses the reaction Cleavage of gelatin types I and V and collagen types IV and V.. Matrix metalloproteinase that plays an essential role in local proteolysis of the extracellular matrix and in leukocyte migration. Could play a role in bone osteoclastic resorption. Cleaves KiSS1 at a Gly-|-Leu bond. Cleaves NINJ1 to generate the Secreted ninjurin-1 form. Cleaves type IV and type V collagen into large C-terminal three quarter fragments and shorter N-terminal one quarter fragments. Degrades fibronectin but not laminin or Pz-peptide. This Rattus norvegicus (Rat) protein is Matrix metalloproteinase-9 (Mmp9).